We begin with the raw amino-acid sequence, 294 residues long: 33 kDa chaperonin (294 aa).

Disulfide bonds link Cys-235–Cys-237 and Cys-268–Cys-271.

It belongs to the HSP33 family. Post-translationally, under oxidizing conditions two disulfide bonds are formed involving the reactive cysteines. Under reducing conditions zinc is bound to the reactive cysteines and the protein is inactive.

It is found in the cytoplasm. Functionally, redox regulated molecular chaperone. Protects both thermally unfolding and oxidatively damaged proteins from irreversible aggregation. Plays an important role in the bacterial defense system toward oxidative stress. The polypeptide is 33 kDa chaperonin (Proteus mirabilis (strain HI4320)).